The chain runs to 628 residues: Phomenoic acid biosynthesis cluster MFS-type transporter (628 aa).

Transmembrane regions (helical) follow at residues 102 to 122 (IHGFPWFLLVISVLSSIFLYA), 150 to 170 (VGFVIGGVAVIMPLGKLYGIL), 174 to 194 (WLYITSVVLFMAASAVCGAAP), 204 to 224 (VFAGAGGIGMYIGTMILLSIN), 232 to 252 (AYLSLVGLVWGIGTVLGPVIG), 262 to 282 (WAFYLNLVIGALLFPVWFFLL), 302 to 322 (FVGAILSIGAFVTTIMPINFG), 329 to 349 (NSGTIIALFVVSGVLWIAFAV), 375 to 395 (MLLFICAAAINSAVFVPIYFI), 407 to 427 (ALDSAIRLLPLIFLLCATILV), 435 to 455 (FGYYMPWYLVGGVFCLIANVF), 488 to 508 (GFEALLGLGAGGSVQAGYAVI), 524 to 544 (IMIAQIGGIALGLACASAVFI), and 595 to 615 (AKAFIVAYAGAAVSLVASLGF).

Belongs to the major facilitator superfamily. TCR/Tet family.

The protein localises to the cell membrane. Its function is as follows. MFS-type transporter; part of the gene cluster that mediates the biosynthesis of phomenoic acid, a long chain aliphatic carboxylic acid that does not appear to be essential for pathogenicity but may play a role in allowing to outcompete other fungi in the environmental niche via its antifungal properties. Is probably involved in the efflux of phomenoic acid. The chain is Phomenoic acid biosynthesis cluster MFS-type transporter from Leptosphaeria maculans (strain JN3 / isolate v23.1.3 / race Av1-4-5-6-7-8) (Blackleg fungus).